The following is a 260-amino-acid chain: MILDDLVAVTKIRLARHQRQQSLADLKQTVAKMPRNHKPDFLIRLKQPGLHVIAEVKKASPSKGTIVTDFPYLAIAKAYDQAGADAISVLTEPDYFNGHLHYLKEISQQVSVPTLRKDFTIDPYMIYEAKANGAVIILLIVAILTDQQLRDYRQLAEKLGMHAIVEAYTAAEVTRALQSGAKIIGINNRNLKDFRVDFTNSLKLRAMVPDNIPVVAESGIKTQEDVEKLAAAGFNAILIGETLMRSNQKKQLIAAFKERA.

The protein belongs to the TrpC family.

It catalyses the reaction 1-(2-carboxyphenylamino)-1-deoxy-D-ribulose 5-phosphate + H(+) = (1S,2R)-1-C-(indol-3-yl)glycerol 3-phosphate + CO2 + H2O. Its pathway is amino-acid biosynthesis; L-tryptophan biosynthesis; L-tryptophan from chorismate: step 4/5. The polypeptide is Indole-3-glycerol phosphate synthase (trpC) (Lacticaseibacillus casei (Lactobacillus casei)).